The following is a 336-amino-acid chain: 3-hydroxyisobutyrate dehydrogenase, mitochondrial (336 aa).

The transit peptide at 1 to 36 directs the protein to the mitochondrion; the sequence is MAASLRLRGAASGLRYWSRRQPPAVASLAAVCSRSM. Residue 40 to 69 participates in NAD(+) binding; that stretch reads TPVGFIGVGNMGNPMAKNLMKHGYPLIIYD. N6-acetyllysine; alternate is present on residues lysine 60 and lysine 76. Residues lysine 60 and lysine 76 each carry the N6-succinyllysine; alternate modification. At lysine 95 the chain carries N6-succinyllysine. Residues 103–104 and asparagine 108 each bind NAD(+); that span reads LP. An N6-acetyllysine modification is found at lysine 121. Position 134 (threonine 134) interacts with NAD(+). Lysine 141 carries the post-translational modification N6-succinyllysine. Position 145 is an N6-acetyllysine (lysine 145). The residue at position 149 (lysine 149) is an N6-acetyllysine; alternate. An N6-succinyllysine; alternate modification is found at lysine 149. The active site involves lysine 209. 2 positions are modified to N6-acetyllysine; alternate: lysine 238 and lysine 242. Residues lysine 238 and lysine 242 each carry the N6-succinyllysine; alternate modification. Lysine 284 is an NAD(+) binding site. An N6-succinyllysine modification is found at lysine 297. Lysine 321 bears the N6-acetyllysine; alternate mark. Lysine 321 bears the N6-succinyllysine; alternate mark.

This sequence belongs to the HIBADH-related family. 3-hydroxyisobutyrate dehydrogenase subfamily. In terms of assembly, homodimer.

The protein localises to the mitochondrion. The catalysed reaction is 3-hydroxy-2-methylpropanoate + NAD(+) = 2-methyl-3-oxopropanoate + NADH + H(+). Its pathway is amino-acid degradation; L-valine degradation. The polypeptide is 3-hydroxyisobutyrate dehydrogenase, mitochondrial (HIBADH) (Bos taurus (Bovine)).